The chain runs to 194 residues: CASP-like protein 2C1 (194 aa).

The Cytoplasmic portion of the chain corresponds to 1–18 (MSSYMEAAAAARAAEAKT). Residues 19–39 (EGLLRGACALLAAAAALLVGL) traverse the membrane as a helical segment. Over 40-59 (NTQTETVLFIRKKATVKDVQ) the chain is Extracellular. The chain crosses the membrane as a helical span at residues 60–80 (ALWVLAMAAAAAAGYHLLQLL). Residues 81 to 109 (RCFYLSRFADGKPCRHRRAIAWLCFLLDK) lie on the Cytoplasmic side of the membrane. A helical transmembrane segment spans residues 110 to 130 (GCAYITFATTVAAAQACVVAL). Topologically, residues 131-151 (YGTHALQWTKLCNIYTRFCEQ) are extracellular. The chain crosses the membrane as a helical span at residues 152–172 (VAGSLVCAMLAAVGTALLSVV). Over 173–194 (SARNLFRLYPSMLSPPPSSFVG) the chain is Cytoplasmic.

Belongs to the Casparian strip membrane proteins (CASP) family. As to quaternary structure, homodimer and heterodimers.

The protein localises to the cell membrane. The chain is CASP-like protein 2C1 from Oryza sativa subsp. japonica (Rice).